We begin with the raw amino-acid sequence, 879 residues long: Putative ankyrin repeat protein L88 (879 aa).

17 ANK repeats span residues K22–K62, K63–I96, E100–A133, N137–D170, N174–A207, N211–A241, K245–A278, K282–T313, R317–H347, E351–N384, S387–I420, N424–F463, N470–S499, S506–I542, N546–T578, S674–I704, and K708–I738.

This is Putative ankyrin repeat protein L88 from Acanthamoeba polyphaga mimivirus (APMV).